Here is a 206-residue protein sequence, read N- to C-terminus: Bis(5'-adenosyl)-triphosphatase (206 aa).

The HIT domain occupies 3 to 115 (KPIYFSKFLV…KINNVGDLIY (113 aa)). The short motif at 96-100 (HLHTH) is the Histidine triad motif element. Catalysis depends on histidine 98, which acts as the Tele-AMP-histidine intermediate. The interval 143 to 164 (RQARKNNSTSATVDGDELSQGP) is disordered.

Homodimer. Requires Mn(2+) as cofactor.

It is found in the cytoplasm. The protein resides in the nucleus. Its subcellular location is the mitochondrion. It carries out the reaction P(1),P(3)-bis(5'-adenosyl) triphosphate + H2O = AMP + ADP + 2 H(+). Functionally, cleaves A-5'-PPP-5'A to yield AMP and ADP. Can cleave all dinucleoside polyphosphates, provided the phosphate chain contains at least 3 phosphates and that 1 of the 2 bases composing the nucleotide is a purine. Is most effective on dinucleoside triphosphates. Negatively regulates intracellular dinucleoside polyphosphate levels, which elevate following heat shock. The chain is Bis(5'-adenosyl)-triphosphatase (HNT2) from Saccharomyces cerevisiae (strain RM11-1a) (Baker's yeast).